Here is a 795-residue protein sequence, read N- to C-terminus: Mitochondrial inner membrane m-AAA protease component paraplegin (795 aa).

The transit peptide at 1–43 directs the protein to the mitochondrion; sequence MAVLLLLLRALRRGPGPGPRPLWGPGPAWSPGFPARPGRGRPY. The propeptide at 44–105 is removed in mature form; it reads MASRPPGDLA…GGTFYFNTSR (62 aa). The Mitochondrial matrix portion of the chain corresponds to 106–144; the sequence is LKQKNKEKDKSKGKAPEEDEEERRRRERDDQMYRERLRT. The interval 108-133 is disordered; sequence QKNKEKDKSKGKAPEEDEEERRRRER. The span at 109–133 shows a compositional bias: basic and acidic residues; the sequence is KNKEKDKSKGKAPEEDEEERRRRER. Residues 145 to 165 form a helical membrane-spanning segment; that stretch reads LLVIAVVMSLLNALSTSGGSI. Over 166–248 the chain is Mitochondrial intermembrane; it reads SWNDFVHEML…DRIPVSYKRT (83 aa). The helical transmembrane segment at 249 to 269 threads the bilayer; the sequence is GFFGNALYSVGMTAVGLAILW. Residues 270–795 are Mitochondrial matrix-facing; sequence YVFRLAGMTG…LGGEEPTWPK (526 aa). The ATP site is built by Ala-312, Gly-352, Cys-353, Gly-354, Lys-355, Thr-356, and Leu-357. Tyr-505 carries the 3'-nitrotyrosine modification. His-574 is a Zn(2+) binding site. Glu-575 is an active-site residue. 2 residues coordinate Zn(2+): His-578 and Asp-650. The tract at residues 701–795 is interaction with PPIF; that stretch reads HEARLLVAKA…LGGEEPTWPK (95 aa). A disordered region spans residues 751 to 795; sequence PHGPKKMIAPQRWIDAQREKQDLGEEETEETQQPPLGGEEPTWPK.

In the N-terminal section; belongs to the AAA ATPase family. This sequence in the C-terminal section; belongs to the peptidase M41 family. As to quaternary structure, forms heterooligomers with AFG3L2; the m-AAA protease is composed of heterohexamers of AFG3L2 and SPG7. Component of the mitochondrial permeability transition pore complex (mPTPC), at least composed of SPG7, VDAC1 and PPIF. Interacts with MAIP1. It depends on Zn(2+) as a cofactor. Post-translationally, upon import into the mitochondrion, the N-terminal transit peptide is cleaved by the mitochondrial-processing peptidase (MPP) to generate an intermediate form which undergoes a second proteolytic cleavage mediated by proteases AFG3L2 removing an additional N-terminal fragment to generate the proteolytically active mature form. As to expression, ubiquitous.

It is found in the mitochondrion inner membrane. It catalyses the reaction ATP + H2O = ADP + phosphate + H(+). Catalytic component of the m-AAA protease, a protease that plays a key role in proteostasis of inner mitochondrial membrane proteins, and which is essential for axonal and neuron development. SPG7 possesses both ATPase and protease activities: the ATPase activity is required to unfold substrates, threading them into the internal proteolytic cavity for hydrolysis into small peptide fragments. The m-AAA protease exerts a dual role in the mitochondrial inner membrane: it mediates the processing of specific regulatory proteins and ensures protein quality control by degrading misfolded polypeptides. Mediates protein maturation of the mitochondrial ribosomal subunit MRPL32/bL32m by catalyzing the cleavage of the presequence of MRPL32/bL32m prior to assembly into the mitochondrial ribosome. Acts as a regulator of calcium in neurons by mediating degradation of SMDT1/EMRE before its assembly with the uniporter complex, limiting the availability of SMDT1/EMRE for MCU assembly and promoting efficient assembly of gatekeeper subunits with MCU. Also regulates mitochondrial calcium by catalyzing degradation of MCU. Plays a role in the formation and regulation of the mitochondrial permeability transition pore (mPTP) and its proteolytic activity is dispensable for this function. This is Mitochondrial inner membrane m-AAA protease component paraplegin from Homo sapiens (Human).